A 300-amino-acid polypeptide reads, in one-letter code: Dihydroorotate dehydrogenase B (NAD(+)), catalytic subunit (300 aa).

FMN-binding positions include Ser20 and 44–45 (KG). Substrate is bound by residues Lys44 and 68-72 (NAIGL). FMN contacts are provided by Asn98 and Asn125. Asn125 lines the substrate pocket. Cys128 functions as the Nucleophile in the catalytic mechanism. Positions 163 and 189 each coordinate FMN. Residue 190–191 (NT) participates in substrate binding. Residues Gly215, 241–242 (GG), and 263–264 (GT) contribute to the FMN site.

Belongs to the dihydroorotate dehydrogenase family. Type 1 subfamily. Heterotetramer of 2 PyrK and 2 PyrD type B subunits. FMN is required as a cofactor.

The protein localises to the cytoplasm. It carries out the reaction (S)-dihydroorotate + NAD(+) = orotate + NADH + H(+). It participates in pyrimidine metabolism; UMP biosynthesis via de novo pathway; orotate from (S)-dihydroorotate (NAD(+) route): step 1/1. Catalyzes the conversion of dihydroorotate to orotate with NAD(+) as electron acceptor. The polypeptide is Dihydroorotate dehydrogenase B (NAD(+)), catalytic subunit (pyrD) (Lachnoclostridium phytofermentans (strain ATCC 700394 / DSM 18823 / ISDg) (Clostridium phytofermentans)).